A 149-amino-acid polypeptide reads, in one-letter code: Internal scaffolding protein ORF3 (149 aa).

Belongs to the microvidae B protein family.

It is found in the host cytoplasm. Its function is as follows. Participates in the assembly of the viral procapsid in the cytoplasm. Released from the procapsid upon genome packaging, possibly through affinity displacement by the protein ORF8, or by proteolysis. This chain is Internal scaffolding protein ORF3, found in Spiroplasma virus 4 (SpV4).